A 1125-amino-acid chain; its full sequence is Transient receptor potential cation channel subfamily A member 1 (1125 aa).

Residues 1-721 are Cytoplasmic-facing; the sequence is MKRSLRRVLR…KWCAYGFRAH (721 aa). ANK repeat units follow at residues 63 to 94, 98 to 127, 131 to 161, 165 to 194, 198 to 227, 239 to 268, 272 to 301, 309 to 338, and 342 to 371; these read ENLC…ALNV, YGNT…NPNL, NMMA…NINL, NGNT…KLCK, WGDY…KTGY, KKAS…HIDM, AKCM…GSSD, NQET…DINS, and EGRS…KVDI. Cystine bridges form between Cys-193–Cys-666, Cys-463–Cys-666, Cys-609–Cys-622, Cys-622–Cys-666, and Cys-634–Cys-859. Pro-395 is modified (4-hydroxyproline; transient). ANK repeat units lie at residues 413–442, 446–475, 482–511, 514–543, and 548–577; these read DGCT…SVHS, DKKS…DTRL, HGMT…LFLS, NGWT…KCTD, and EGNT…DILL. The (E)-cinnamaldehyde site is built by Cys-415 and Cys-422. Residue Cys-622 participates in (E)-cinnamaldehyde binding. The residue at position 634 (Cys-634) is a Cysteine sulfenic acid (-SOH); transient; in hyperoxia. Cys-642, Cys-666, and Lys-712 together coordinate (E)-cinnamaldehyde. A helical transmembrane segment spans residues 722–742; that stretch reads MMNLGSYCLGLIPMTLLVVKI. The Extracellular portion of the chain corresponds to 743–767; that stretch reads QPGMAFNSTGIINETISTHEERINT. Residues Asn-749 and Asn-755 are each glycosylated (N-linked (GlcNAc...) asparagine). Residues 768 to 788 traverse the membrane as a helical segment; the sequence is LNSFPLKICMILVFLSSIFGY. Topologically, residues 789–806 are cytoplasmic; sequence CKEVVQIFQQKRNYFLDY. Glu-791, Gln-794, Asn-808, and Glu-811 together coordinate Ca(2+). A helical membrane pass occupies residues 807-827; the sequence is NNALEWVIYTTSMIFVLPLFL. At 828 to 832 the chain is on the extracellular side; the sequence is DIPAY. The chain crosses the membrane as a helical span at residues 833–853; the sequence is MQWQCGAIAIFFYWMNFLLYL. The Cytoplasmic segment spans residues 854–876; that stretch reads QRFENCGIFIVMLEVIFKTLLRS. Cys-859 is modified (cysteine sulfenic acid (-SOH); transient; in hyperoxia). The helical transmembrane segment at 877–897 threads the bilayer; the sequence is TGVFIFLLLAFGLSFYVLLNF. Residues 898 to 904 lie on the Extracellular side of the membrane; it reads QDAFSTP. Positions 905-925 form an intramembrane region, pore-forming; that stretch reads LLSLIQTFSMMLGDINYRDAF. Residues 926–937 are Extracellular-facing; the sequence is LEPLFRNELAYP. The helical transmembrane segment at 938-959 threads the bilayer; that stretch reads VLTFGQLIAFTMFVPIVLMNLL. Topologically, residues 960-1125 are cytoplasmic; the sequence is IGLAVGDIAE…THCSISHPDI (166 aa). A coiled-coil region spans residues 1044–1073; it reads MEILKQKYRLKDLTSLLEKQHELIKLIIQK. A 1,2-diacyl-sn-glycero-3-phospho-(1D-myo-inositol) is bound at residue 1048-1054; that stretch reads KQKYRLK.

The protein belongs to the transient receptor (TC 1.A.4) family. In terms of assembly, homotetramer. Interacts with TMEM100. Interacts with EGLN1. Interacts with the scorpion wasabi receptor toxin at the same site that electrophiles but in a non-covalent manner. Post-translationally, TRPA1 activation by electrophiles occurs though covalent modification of specific cysteine residues in the N-terminal cytoplasmic domain. Hydroxylation is required for TRPA1 activity inhibition in normoxia. In hypoxia, the decrease in oxygen concentration diminishes the activity of the hydroxylase EGLN1, thus relieving TRPA1 from inhibition and ultimately leading to channel activation. In terms of processing, oxidation of Cys-634 and Cys-859 in hyperoxia may override the hydroxylase EGLN1-mediated inhibition, causing TRPA1 activation. As to expression, specifically expressed in a subset of nociceptive neurons. Expressed in dorsal root ganglia.

Its subcellular location is the cell membrane. The enzyme catalyses Ca(2+)(in) = Ca(2+)(out). It carries out the reaction Mg(2+)(in) = Mg(2+)(out). The catalysed reaction is Na(+)(in) = Na(+)(out). It catalyses the reaction K(+)(in) = K(+)(out). The enzyme catalyses Zn(2+)(in) = Zn(2+)(out). Its activity is regulated as follows. Electrophilic ligands activate the channel by covalent modification of intracellular cysteines; Cys-622 plays a key role in covalent binding of electrophiles. Extracellular Ca(2+) both potentiates and inactivates TRPA1; a rapid potentiation follows by slow desensitization. Activated by increase in intracellular Ca(2+) concentration. Inhibited by ruthenium red, a potent blocker of TRPV channels and selectively by A-967079. Activated by benzyl isothiocyanate (BITC), iodoacetamide, sulfhydryl reactive agent MTSEA, N-methyl maleimide (NMM), N-ethylmaleimide (NEM), and 2-aminoethyldiphenylborinate (2-APB). Also activated by hyperoxia. Acivated by intracellular Zn(2+). TRPA1 activation may critically depend on the presence of small intracellular compounds such as polyphosphates. Its function is as follows. Ligand-activated Ca(2+)-permeable, nonselective cation channel. Involved in pain detection and possibly also in cold perception, oxygen concentration perception, cough, itch, and inner ear function. Has a relatively high Ca(2+) selectivity, with a preference for divalent over monovalent cations (Ca(2+) &gt; Ba(2+) &gt; Mg(2+) &gt; NH4(+) &gt; Li(+) &gt; K(+)), the influx of cation into the cytoplasm, leads to membrane depolarization. Has a central role in the pain response to endogenous inflammatory mediators, such as bradykinin and to a diverse array of irritants. Activated by a large variety of structurally unrelated electrophilic and non-electrophilic chemical compounds, such as allylthiocyanate (AITC) from mustard oil or wasabi, cinnamaldehyde, diallyl disulfide (DADS) from garlic, and acrolein, an environmental irritant. Electrophilic ligands activate TRPA1 by interacting with critical N-terminal Cys residues in a covalent manner. Non-electrophile agonists bind at distinct sites in the transmembrane domain to promote channel activation. Also acts as an ionotropic cannabinoid receptor by being activated by delta(9)-tetrahydrocannabinol (THC), the psychoactive component of marijuana. May be a component for the mechanosensitive transduction channel of hair cells in inner ear, thereby participating in the perception of sounds. In Rattus norvegicus (Rat), this protein is Transient receptor potential cation channel subfamily A member 1.